We begin with the raw amino-acid sequence, 42 residues long: Photosystem I reaction center subunit IX (42 aa).

Residues 7–27 form a helical membrane-spanning segment; that stretch reads YLSTAPVLATLWFGFLAGLLI.

It belongs to the PsaJ family.

The protein localises to the plastid. The protein resides in the chloroplast thylakoid membrane. Functionally, may help in the organization of the PsaE and PsaF subunits. The polypeptide is Photosystem I reaction center subunit IX (Huperzia lucidula (Shining clubmoss)).